The following is a 271-amino-acid chain: Hydroxyethylthiazole kinase (271 aa).

Substrate is bound at residue M50. The ATP site is built by R126 and T172. G199 serves as a coordination point for substrate.

Belongs to the Thz kinase family. Mg(2+) serves as cofactor.

It catalyses the reaction 5-(2-hydroxyethyl)-4-methylthiazole + ATP = 4-methyl-5-(2-phosphooxyethyl)-thiazole + ADP + H(+). The protein operates within cofactor biosynthesis; thiamine diphosphate biosynthesis; 4-methyl-5-(2-phosphoethyl)-thiazole from 5-(2-hydroxyethyl)-4-methylthiazole: step 1/1. Its function is as follows. Catalyzes the phosphorylation of the hydroxyl group of 4-methyl-5-beta-hydroxyethylthiazole (THZ). This chain is Hydroxyethylthiazole kinase, found in Akkermansia muciniphila (strain ATCC BAA-835 / DSM 22959 / JCM 33894 / BCRC 81048 / CCUG 64013 / CIP 107961 / Muc).